Reading from the N-terminus, the 346-residue chain is NADH-ubiquinone oxidoreductase chain 2 (346 aa).

11 helical membrane-spanning segments follow: residues 1–21, 25–45, 60–80, 96–116, 124–144, 149–169, 178–198, 200–220, 242–262, 274–294, and 325–345; these read MNPHAKLISLISLLLGTTITI, HWIMAWTGLEINTLAIIPLIS, FLVQAAASALVLFSSMSNAWA, MLLTAAIAIKLGLVPFHFWFP, LTTALLLSTLMKLPPMAILLM, LNPTVLTSMALASAALGGWMG, ILAFSSIAHLGWMTMIIIYNP, LTLLTFYLYILMTATVFLSLN, AALMLTLLSLAGLPPLTGFMP, EMTTVATIIALLSLLGLFFYL, and IAILSSLSAILLPISPMILAA.

Belongs to the complex I subunit 2 family.

It is found in the mitochondrion inner membrane. The catalysed reaction is a ubiquinone + NADH + 5 H(+)(in) = a ubiquinol + NAD(+) + 4 H(+)(out). In terms of biological role, core subunit of the mitochondrial membrane respiratory chain NADH dehydrogenase (Complex I) that is believed to belong to the minimal assembly required for catalysis. Complex I functions in the transfer of electrons from NADH to the respiratory chain. The immediate electron acceptor for the enzyme is believed to be ubiquinone. This Struthio camelus (Common ostrich) protein is NADH-ubiquinone oxidoreductase chain 2 (MT-ND2).